A 416-amino-acid chain; its full sequence is Tyrosine--tRNA ligase (416 aa).

An L-tyrosine-binding site is contributed by tyrosine 40. The 'HIGH' region signature appears at 45–54; it reads ATAASLHVGH. L-tyrosine contacts are provided by tyrosine 177 and glutamine 181. The short motif at 237–241 is the 'KMSKS' region element; sequence KMGKS. An ATP-binding site is contributed by lysine 240. The S4 RNA-binding domain occupies 351-416; it reads LSVAHFLVAA…RKKHKLVRLS (66 aa).

Belongs to the class-I aminoacyl-tRNA synthetase family. TyrS type 1 subfamily. As to quaternary structure, homodimer.

The protein localises to the cytoplasm. It carries out the reaction tRNA(Tyr) + L-tyrosine + ATP = L-tyrosyl-tRNA(Tyr) + AMP + diphosphate + H(+). Catalyzes the attachment of tyrosine to tRNA(Tyr) in a two-step reaction: tyrosine is first activated by ATP to form Tyr-AMP and then transferred to the acceptor end of tRNA(Tyr). The chain is Tyrosine--tRNA ligase from Cereibacter sphaeroides (strain ATCC 17029 / ATH 2.4.9) (Rhodobacter sphaeroides).